We begin with the raw amino-acid sequence, 179 residues long: Putative manganese efflux pump MntP (179 aa).

Helical transmembrane passes span 4–24 (VLIL…GLGI), 39–59 (LFFG…GIGL), 69–89 (IVAF…AFNE), 102–122 (ILLT…YSLH), 128–148 (IYLS…IGVY), and 159–179 (SKAE…ILLF).

The protein belongs to the MntP (TC 9.B.29) family.

The protein resides in the cell inner membrane. Probably functions as a manganese efflux pump. In Aliarcobacter butzleri (strain RM4018) (Arcobacter butzleri), this protein is Putative manganese efflux pump MntP.